A 305-amino-acid chain; its full sequence is D-alanine--D-alanine ligase (305 aa).

The region spanning 107 to 299 is the ATP-grasp domain; sequence KVIFASAGLK…FGELVLRILQ (193 aa). 134–185 is an ATP binding site; the sequence is PLPVVVKPSREGSSVGVGIVRDPSRMQAALDEAFRYDSEILIEGFIDGREVQ. Mg(2+) contacts are provided by aspartate 253, glutamate 266, and asparagine 268.

The protein belongs to the D-alanine--D-alanine ligase family. The cofactor is Mg(2+). Mn(2+) serves as cofactor.

The protein resides in the cytoplasm. The enzyme catalyses 2 D-alanine + ATP = D-alanyl-D-alanine + ADP + phosphate + H(+). Its pathway is cell wall biogenesis; peptidoglycan biosynthesis. Cell wall formation. This Citrifermentans bemidjiense (strain ATCC BAA-1014 / DSM 16622 / JCM 12645 / Bem) (Geobacter bemidjiensis) protein is D-alanine--D-alanine ligase.